We begin with the raw amino-acid sequence, 352 residues long: Keratocan (352 aa).

A signal peptide spans 1–20 (MASTICFILWVVFVTDTVWT). One can recognise an LRRNT domain in the interval 33–71 (EDWTMHDFDCPRECFCPPSFPTALYCENRGLKEIPAIPS). Intrachain disulfides connect Cys-42–Cys-48 and Cys-46–Cys-58. LRR repeat units lie at residues 72 to 93 (RIWY…PFEN), 96 to 117 (QLRW…KGAL), 122 to 142 (KLLF…PLPR), 143 to 164 (SLEQ…TFSN), 167 to 180 (NLTL…KLLD), 193 to 214 (NLMQ…LPAN), 215 to 235 (TMQV…YFNV), and 238 to 258 (KVAF…PSSG). Residue Asn-93 is glycosylated (N-linked (GlcNAc...) (keratan sulfate) asparagine). N-linked (GlcNAc...) (keratan sulfate) asparagine glycosylation is present at Asn-167. Asn-222 carries N-linked (GlcNAc...) asparagine glycosylation. Asn-260 carries an N-linked (GlcNAc...) (keratan sulfate) asparagine glycan. 2 LRR repeats span residues 263–282 (SILD…KISA) and 283–304 (HLQH…VICP). N-linked (GlcNAc...) asparagine glycosylation occurs at Asn-298. Cys-303 and Cys-343 are joined by a disulfide.

It belongs to the small leucine-rich proteoglycan (SLRP) family. SLRP class II subfamily. In terms of processing, binds three long, highly sulfated keratan sulfate chains in the cornea but short, non-sulfated poly(N-acetyllactosamine) chains in other tissues. Post-translationally, the N-terminus is blocked. Abundant in cornea and sclera but also found in other tissues.

It localises to the secreted. It is found in the extracellular space. Its subcellular location is the extracellular matrix. Functionally, may be important in developing and maintaining corneal transparency and for the structure of the stromal matrix. The chain is Keratocan (KERA) from Bos taurus (Bovine).